Here is a 151-residue protein sequence, read N- to C-terminus: Small ribosomal subunit protein uS15 (151 aa).

It belongs to the universal ribosomal protein uS15 family.

This is Small ribosomal subunit protein uS15 (RPS13) from Ciona intestinalis (Transparent sea squirt).